Reading from the N-terminus, the 316-residue chain is UPF0761 membrane protein PM1616 (316 aa).

The next 6 membrane-spanning stretches (helical) occupy residues 36 to 56 (MLALVPLVMVVFSVFSAFPVF), 92 to 112 (QMSAVGVISLVVVALMLINSI), 128 to 148 (LVFSFAIYWLILTLGPLLIGA), 172 to 192 (ILSFVPFFLTWLIFTLIYTVV), 204 to 224 (IGALVAAVFFTLGKQAFLWYV), and 236 to 256 (AMATLPIMLLWIQLSWVVILI).

Belongs to the UPF0761 family.

The protein resides in the cell inner membrane. This Pasteurella multocida (strain Pm70) protein is UPF0761 membrane protein PM1616.